The following is a 258-amino-acid chain: Acetylglutamate kinase (258 aa).

Substrate-binding positions include glycine 44–glycine 45, arginine 66, and asparagine 158. ATP is bound by residues aspartate 181–leucine 186 and isoleucine 209–threonine 211.

It belongs to the acetylglutamate kinase family. ArgB subfamily. In terms of assembly, homodimer.

It is found in the cytoplasm. It carries out the reaction N-acetyl-L-glutamate + ATP = N-acetyl-L-glutamyl 5-phosphate + ADP. It participates in amino-acid biosynthesis; L-arginine biosynthesis; N(2)-acetyl-L-ornithine from L-glutamate: step 2/4. Functionally, catalyzes the ATP-dependent phosphorylation of N-acetyl-L-glutamate. In Salmonella arizonae (strain ATCC BAA-731 / CDC346-86 / RSK2980), this protein is Acetylglutamate kinase.